A 269-amino-acid chain; its full sequence is 5'-nucleotidase SurE (269 aa).

A divalent metal cation is bound by residues aspartate 8, aspartate 9, serine 39, and asparagine 92.

It belongs to the SurE nucleotidase family. The cofactor is a divalent metal cation.

It is found in the cytoplasm. It carries out the reaction a ribonucleoside 5'-phosphate + H2O = a ribonucleoside + phosphate. In terms of biological role, nucleotidase that shows phosphatase activity on nucleoside 5'-monophosphates. This chain is 5'-nucleotidase SurE, found in Psychrobacter cryohalolentis (strain ATCC BAA-1226 / DSM 17306 / VKM B-2378 / K5).